The chain runs to 427 residues: Enolase (427 aa).

Gln-163 is a (2R)-2-phosphoglycerate binding site. Glu-205 functions as the Proton donor in the catalytic mechanism. The Mg(2+) site is built by Asp-242, Glu-288, and Asp-315. (2R)-2-phosphoglycerate-binding residues include Lys-340, Arg-369, Ser-370, and Lys-391. The active-site Proton acceptor is Lys-340.

This sequence belongs to the enolase family. The cofactor is Mg(2+).

Its subcellular location is the cytoplasm. The protein localises to the secreted. The protein resides in the cell surface. The catalysed reaction is (2R)-2-phosphoglycerate = phosphoenolpyruvate + H2O. The protein operates within carbohydrate degradation; glycolysis; pyruvate from D-glyceraldehyde 3-phosphate: step 4/5. Catalyzes the reversible conversion of 2-phosphoglycerate (2-PG) into phosphoenolpyruvate (PEP). It is essential for the degradation of carbohydrates via glycolysis. This chain is Enolase, found in Amoebophilus asiaticus (strain 5a2).